A 333-amino-acid polypeptide reads, in one-letter code: Sodium/bile acid cotransporter 7 (333 aa).

The Cytoplasmic portion of the chain corresponds to M1–E10. Residues W11–V31 traverse the membrane as a helical segment. The Extracellular segment spans residues K32–K37. The chain crosses the membrane as a helical span at residues P38–L58. Over K59–K71 the chain is Cytoplasmic. A helical transmembrane segment spans residues L72 to L92. The Extracellular segment spans residues Q93–W103. A helical transmembrane segment spans residues L104–L124. The Cytoplasmic segment spans residues T125–K126. A helical transmembrane segment spans residues A127–G147. Topologically, residues S148–S151 are extracellular. The chain crosses the membrane as a helical span at residues V152–G172. Residues Q173 to P189 are Cytoplasmic-facing. The helical transmembrane segment at F190 to F210 threads the bilayer. Over A211–L222 the chain is Extracellular. A helical membrane pass occupies residues I223–F243. Residues S244–A258 lie on the Cytoplasmic side of the membrane. Residues I259–F279 form a helical membrane-spanning segment. Residues A280–S286 lie on the Extracellular side of the membrane. Residues L287–V307 form a helical membrane-spanning segment. The Cytoplasmic segment spans residues P308–V333.

Belongs to the bile acid:sodium symporter (BASS) (TC 2.A.28) family.

The protein localises to the cell membrane. Its subcellular location is the endoplasmic reticulum membrane. It localises to the golgi apparatus membrane. Functionally, involved in teeth and skeletal development. Has an essential role in the biosynthesis and trafficking of glycosaminoglycans and glycoproteins to produce a proper functioning extracellular matrix. Required for extracellular matrix mineralization. Also involved in the regulation of cellular calcium homeostasis. Does not show transport activity towards bile acids or steroid sulfates. The protein is Sodium/bile acid cotransporter 7 (SLC10A7) of Gallus gallus (Chicken).